A 228-amino-acid chain; its full sequence is ATP synthase subunit a (228 aa).

Helical transmembrane passes span 14-34 (YFLLMPMTLASMLMAISWLFF), 71-91 (WVPIITTVFILLFSVNVLGLL), 101-121 (ISLTYSIGIPIWMSVNILGFY), 139-159 (FLLPLMVIIETLSLFAQPIAL), 165-185 (ANLTAGHLLIYLMSTAIWVLM), and 188-208 (VAIASITLIIFILLFLLEIGV).

This sequence belongs to the ATPase A chain family. As to quaternary structure, F-type ATPases have 2 components, CF(1) - the catalytic core - and CF(0) - the membrane proton channel. CF(1) has five subunits: alpha(3), beta(3), gamma(1), delta(1), epsilon(1). CF(0) has three main subunits: a, b and c.

Its subcellular location is the mitochondrion inner membrane. Mitochondrial membrane ATP synthase (F(1)F(0) ATP synthase or Complex V) produces ATP from ADP in the presence of a proton gradient across the membrane which is generated by electron transport complexes of the respiratory chain. F-type ATPases consist of two structural domains, F(1) - containing the extramembraneous catalytic core and F(0) - containing the membrane proton channel, linked together by a central stalk and a peripheral stalk. During catalysis, ATP synthesis in the catalytic domain of F(1) is coupled via a rotary mechanism of the central stalk subunits to proton translocation. Key component of the proton channel; it may play a direct role in the translocation of protons across the membrane. The polypeptide is ATP synthase subunit a (ATP6) (Pisaster ochraceus (Ochre sea star)).